We begin with the raw amino-acid sequence, 173 residues long: Protein tyrosine phosphatase type IVA 1 (173 aa).

The Tyrosine-protein phosphatase domain occupies 8–161 (APVEVTYKNM…YRPKMRLRFK (154 aa)). A disulfide bridge connects residues Cys-49 and Cys-104. The active-site Proton donor is Asp-72. Residues 97–132 (GCCIAVHCVAGLGRAPVLVALALIEGGMKYEDAVQF) are interaction with ATF5. Catalysis depends on Cys-104, which acts as the Phosphocysteine intermediate. 105–110 (VAGLGR) is a binding site for phosphate. Arg-110 is a binding site for substrate. At Cys-170 the chain carries Cysteine methyl ester. Cys-170 carries S-farnesyl cysteine lipidation. Residues 171 to 173 (CIQ) constitute a propeptide, removed in mature form.

It belongs to the protein-tyrosine phosphatase family. As to quaternary structure, homotrimer. Interacts with ATF5. Interacts with tubulin. In terms of processing, farnesylated. Farnesylation is required for membrane targeting. Unfarnesylated forms are shifted into the nucleus. Expressed in bone marrow, lymph nodes, T lymphocytes, spleen, thymus and tonsil. Overexpressed in tumor cell lines.

It localises to the cell membrane. The protein resides in the early endosome. It is found in the endoplasmic reticulum. Its subcellular location is the cytoplasm. The protein localises to the cytoskeleton. It localises to the spindle. The protein resides in the nucleus. The enzyme catalyses O-phospho-L-tyrosyl-[protein] + H2O = L-tyrosyl-[protein] + phosphate. Inhibited by sodium orthovanadate and pentamidine. In terms of biological role, protein tyrosine phosphatase which stimulates progression from G1 into S phase during mitosis. May play a role in the development and maintenance of differentiating epithelial tissues. Enhances cell proliferation, cell motility and invasive activity, and promotes cancer metastasis. The chain is Protein tyrosine phosphatase type IVA 1 (PTP4A1) from Homo sapiens (Human).